The following is a 104-amino-acid chain: Meiotically up-regulated gene 150 protein (104 aa).

3 helical membrane-spanning segments follow: residues 30 to 50, 54 to 74, and 84 to 104; these read FFLK…KAWI, TISL…IPYF, and LLWF…SLEI.

It is found in the endoplasmic reticulum membrane. Its function is as follows. Has a role in meiosis. This Schizosaccharomyces pombe (strain 972 / ATCC 24843) (Fission yeast) protein is Meiotically up-regulated gene 150 protein (mug150).